The sequence spans 280 residues: Acetyl-coenzyme A carboxylase carboxyl transferase subunit beta (280 aa).

A CoA carboxyltransferase N-terminal domain is found at 24-280 (AWIKCDKCKN…IYTLIRHTHG (257 aa)). Residues C28, C31, C47, and C50 each contribute to the Zn(2+) site. A C4-type zinc finger spans residues 28 to 50 (CDKCKNILYIEDLLKNLKICPHC).

This sequence belongs to the AccD/PCCB family. In terms of assembly, acetyl-CoA carboxylase is a heterohexamer composed of biotin carboxyl carrier protein (AccB), biotin carboxylase (AccC) and two subunits each of ACCase subunit alpha (AccA) and ACCase subunit beta (AccD). The cofactor is Zn(2+).

Its subcellular location is the cytoplasm. The enzyme catalyses N(6)-carboxybiotinyl-L-lysyl-[protein] + acetyl-CoA = N(6)-biotinyl-L-lysyl-[protein] + malonyl-CoA. It functions in the pathway lipid metabolism; malonyl-CoA biosynthesis; malonyl-CoA from acetyl-CoA: step 1/1. Its function is as follows. Component of the acetyl coenzyme A carboxylase (ACC) complex. Biotin carboxylase (BC) catalyzes the carboxylation of biotin on its carrier protein (BCCP) and then the CO(2) group is transferred by the transcarboxylase to acetyl-CoA to form malonyl-CoA. The protein is Acetyl-coenzyme A carboxylase carboxyl transferase subunit beta of Sulfurihydrogenibium sp. (strain YO3AOP1).